A 548-amino-acid polypeptide reads, in one-letter code: MNFKSTVITAMCCFFSFAVLASEKLEKPKLVVGLVVDQMRWDYLYRYYDRYSENGFKRLLNEGFSSENTLIDYVPTYTAIGHSTIYTGSVPAINGIAGNDFIIQATGQNMYCTQDDSVQAVGGEGKVGQQSPKNLLVSTITDQLKLATNFQSKVIGIAIKDRGGILPAGHFANAAYWLDGKTGDWITSTYYMKDLPKWVKGFNKEKVVDQYYKQGWKTLYPIDTYVLSTADDNLYEETFKGEKTPTFPRDLVKLKKENGYELIKSTPQGNTLTLDFAKRAIENEQLGNNPLQVTDFLAVSLSSTDYIGHQFAINSIEIEDTYLRLDRDIADFLAYLDQNIGKGNYTLFLSADHGAAHNPKFFADQKGNSGYFDTKAIRKDLNEKLASKFGVADLVKSLANYQVHLNYEVIEANDVEEDEVIAAAIKLLKKVDGVAFVVDMNEAAESSVPQILRERIINGYNFKRSGAIQLILEPQWFSGSKDGKGTTHGSWNSYDAHIPAVFLGWGVKPGKTTRQTHMTDIAPTIAQILKIEFPNGNIGTPIQEAIEQ.

A signal peptide spans 1 to 21 (MNFKSTVITAMCCFFSFAVLA). Residues aspartate 37 and threonine 78 each contribute to the a divalent metal cation site. The active-site Phosphothreonine intermediate is the threonine 78. Substrate-binding positions include asparagine 99 and 160–162 (KDR). An ATP-binding motif is present at residues 179 to 187 (DGKTGDWIT). 5 residues coordinate a divalent metal cation: aspartate 305, histidine 309, aspartate 352, histidine 353, and histidine 488.

Requires Mg(2+) as cofactor.

The protein resides in the cell inner membrane. The catalysed reaction is Ca(2+)(in) + ATP + H2O = Ca(2+)(out) + ADP + phosphate + H(+). Completely inhibited by vanadate(3-). Also inhibited by lanthanoid atom and phosphate. Not inhibited by N-ethylmaleimide, 1,3-dicyclohexylcarbodiimide, oligomycin, ouabain, valinomycin, nigericin, thapsigargin, cyclopiazonic acid or fluorescein isothiocyanate. Catalyzes the hydrolysis of ATP coupled with the transport of calcium. Has some hydrolysis activity also with dATP, GTP, UTP, ITP and 4-nitrophenyl phosphate as substrate. No activity with ADP, CTP, acetyl dihydrogen phosphate or AMP-PNP as substrate. This Myroides odoratus (Flavobacterium odoratum) protein is Calcium-transporting ATPase.